A 222-amino-acid chain; its full sequence is Sperm acrosome-associated protein 9 (222 aa).

The interval 164-222 (QHVSEPQAHQESTRGAARPAQAIGTQPRATKHKCRQLTKASLKPRGCSKPPWRPPGGKL) is disordered.

Microtubule inner protein component of sperm flagellar doublet microtubules. Interacts with CABP1 and CALR. Interacts with INCA1. Interacts with microtubules.

It localises to the cytoplasm. The protein localises to the cytoplasmic vesicle. Its subcellular location is the secretory vesicle. It is found in the acrosome. The protein resides in the cytoskeleton. It localises to the cilium basal body. The protein localises to the flagellum axoneme. Its subcellular location is the cilium axoneme. It is found in the nucleus. In terms of biological role, microtubule inner protein (MIP) part of the dynein-decorated doublet microtubules (DMTs) of multiciliated respiratory cells and the distal singlet microtubules of monoflagellated spermatozoa. Forms an extensive interaction network cross-linking the lumen of axonemal doublet microtubules. This is Sperm acrosome-associated protein 9 from Homo sapiens (Human).